Reading from the N-terminus, the 184-residue chain is Alpha-tubulin N-acetyltransferase (184 aa).

In terms of domain architecture, N-acetyltransferase spans 1–174 (MNIPPEKMHN…NNFVIFAEYF (174 aa)). Acetyl-CoA is bound by residues 108 to 121 (FYIQ…GLGL) and 144 to 153 (SYKLQSFLKK).

The protein belongs to the acetyltransferase ATAT1 family.

The catalysed reaction is L-lysyl-[alpha-tubulin] + acetyl-CoA = N(6)-acetyl-L-lysyl-[alpha-tubulin] + CoA + H(+). Its function is as follows. Specifically acetylates 'Lys-40' in alpha-tubulin on the lumenal side of microtubules. Promotes microtubule destabilization and accelerates microtubule dynamics; this activity may be independent of acetylation activity. Acetylates alpha-tubulin with a slow enzymatic rate, due to a catalytic site that is not optimized for acetyl transfer. Enters the microtubule through each end and diffuses quickly throughout the lumen of microtubules. Acetylates only long/old microtubules because of its slow acetylation rate since it does not have time to act on dynamically unstable microtubules before the enzyme is released. The protein is Alpha-tubulin N-acetyltransferase of Plasmodium knowlesi (strain H).